Here is a 424-residue protein sequence, read N- to C-terminus: Ankyrin repeat domain-containing protein 61 (424 aa).

ANK repeat units lie at residues 80-109, 113-169, 172-201, 205-234, 239-278, 282-311, and 315-348; these read LSFL…DPEA, QGFT…ARVD, HRHC…QVNA, SSMT…SVNC, TGNT…QVNA, DGQA…NVNI, and NGES…PLRL.

This is Ankyrin repeat domain-containing protein 61 (ANKRD61) from Bos taurus (Bovine).